We begin with the raw amino-acid sequence, 940 residues long: BTB/POZ domain-containing protein FBL11 (940 aa).

Residues 41 to 109 (WDMSEILSYG…LYGYDIEITS (69 aa)) form the BTB domain. Residues 155–258 (IQIWSFGLEH…FSLLPLWFIA (104 aa)) enclose the BACK domain.

It participates in protein modification; protein ubiquitination. May act as a substrate-specific adapter of an E3 ubiquitin-protein ligase complex (CUL3-RBX1-BTB) which mediates the ubiquitination and subsequent proteasomal degradation of target proteins. This Arabidopsis thaliana (Mouse-ear cress) protein is BTB/POZ domain-containing protein FBL11 (FBL11).